A 963-amino-acid chain; its full sequence is Respiratory burst oxidase homolog protein A (963 aa).

Positions 1-12 are enriched in basic and acidic residues; it reads MRGLPGHERRWT. The interval 1-36 is disordered; the sequence is MRGLPGHERRWTSDTVSSGKDLSGESSPGTDSGNIS. Residues 1-399 lie on the Cytoplasmic side of the membrane; it reads MRGLPGHERR…VYSLQENWKR (399 aa). Over residues 13–36 the composition is skewed to polar residues; that stretch reads SDTVSSGKDLSGESSPGTDSGNIS. EF-hand-like regions lie at residues 219-227 and 253-264; these read AKDGYLYRS and RRLKVDKISKEE. Residues 276–311 enclose the EF-hand domain; it reads SFDSRLQIFFDMVDKNEDGRIGEEEVKEIIMLSASA. 5 residues coordinate Ca(2+): Asp-289, Asn-291, Asp-293, Arg-295, and Glu-300. The chain crosses the membrane as a helical span at residues 400 to 420; it reads IWVLVLWILIMIGLFLWKFYL. At 421–435 the chain is on the extracellular side; that stretch reads YKQKSAFQVMGYCLL. Residues 436 to 456 traverse the membrane as a helical segment; the sequence is TAKGAAETLKFNMALILLPVC. Residues 438–595 form the Ferric oxidoreductase domain; the sequence is KGAAETLKFN…LLIIVYIVLI (158 aa). Over 457–482 the chain is Cytoplasmic; the sequence is RNTITFLRSTKLSCFVPFDDNINFHK. Residues 483 to 503 form a helical membrane-spanning segment; the sequence is TVAAAIVTGIILHAGNHLVCD. Residues 504 to 535 lie on the Extracellular side of the membrane; sequence FPKLIHANNTNYQKYLVNDFGPSQPQYIDLVK. Residues 536 to 556 form a helical membrane-spanning segment; that stretch reads GVEGVTGIIMVILMAIAFTLA. At 557–583 the chain is on the cytoplasmic side; sequence TRWFRRSLIKFPKPFDRLTGFNAFWYS. A helical transmembrane segment spans residues 584–604; sequence HHLLIIVYIVLIIHGTFLYLV. At 605–759 the chain is on the extracellular side; sequence HNWYSKTTWM…APAQDYRKYD (155 aa). In terms of domain architecture, FAD-binding FR-type spans 634-754; that stretch reads SGLYTVRLLK…DGPYGAPAQD (121 aa). The chain crosses the membrane as a helical span at residues 760-780; sequence VLLLVGLGIGATPFISILKDL. Residues 781–963 are Cytoplasmic-facing; that stretch reads LKNIVTMEEQ…TKFEFHKEHF (183 aa).

The protein belongs to the RBOH (TC 5.B.1.3) family. As to quaternary structure, monomer and homodimer. In terms of processing, phosphorylated by CPK.

The protein localises to the cell membrane. Functionally, calcium-dependent NADPH oxidase that generates superoxide. Involved in the rapid and transient phase I oxidative burst induced by pathogen infection. The chain is Respiratory burst oxidase homolog protein A (RBOHA) from Solanum tuberosum (Potato).